The primary structure comprises 291 residues: 4-diphosphocytidyl-2-C-methyl-D-erythritol kinase (291 aa).

Lys-10 is a catalytic residue. 100-110 (PIGGGLGGGSS) provides a ligand contact to ATP. Residue Asp-142 is part of the active site.

Belongs to the GHMP kinase family. IspE subfamily. Homodimer.

It carries out the reaction 4-CDP-2-C-methyl-D-erythritol + ATP = 4-CDP-2-C-methyl-D-erythritol 2-phosphate + ADP + H(+). Its pathway is isoprenoid biosynthesis; isopentenyl diphosphate biosynthesis via DXP pathway; isopentenyl diphosphate from 1-deoxy-D-xylulose 5-phosphate: step 3/6. In terms of biological role, catalyzes the phosphorylation of the position 2 hydroxy group of 4-diphosphocytidyl-2C-methyl-D-erythritol. The polypeptide is 4-diphosphocytidyl-2-C-methyl-D-erythritol kinase (Hamiltonella defensa subsp. Acyrthosiphon pisum (strain 5AT)).